Here is a 211-residue protein sequence, read N- to C-terminus: Recombination protein RecR (211 aa).

The segment at 70-85 (CRECFLITDREVCPIC) adopts a C4-type zinc-finger fold. Positions 93–190 (KFICVVEESQ…KITRTAYGFQ (98 aa)) constitute a Toprim domain.

This sequence belongs to the RecR family.

Functionally, may play a role in DNA repair. It seems to be involved in an RecBC-independent recombinational process of DNA repair. It may act with RecF and RecO. This chain is Recombination protein RecR, found in Aquifex aeolicus (strain VF5).